The primary structure comprises 366 residues: Mitochondrial carrier protein MTM1 (366 aa).

Solcar repeat units lie at residues 14–149 (ERML…IRDV), 156–250 (YPTL…CKER), and 266–359 (VHFI…SKKV). 6 consecutive transmembrane segments (helical) span residues 17–36 (LSAG…MDVV), 126–146 (SLTL…YEYI), 162–182 (LFCG…LELV), 229–249 (TLWR…LCKE), 268–286 (FINS…AICT), and 331–352 (LYTG…MISS).

The protein belongs to the mitochondrial carrier (TC 2.A.29) family.

The protein localises to the mitochondrion inner membrane. Functionally, involved in the mitochondrial activation of SOD2 by specifically facilitating insertion of the essential manganese cofactor. Has the ability to activate iron regulon in an iron-dependent manner. Responds to calorie restriction (CR) strength. The protein is Mitochondrial carrier protein MTM1 (MTM1) of Saccharomyces cerevisiae (strain ATCC 204508 / S288c) (Baker's yeast).